The sequence spans 113 residues: Small ribosomal subunit protein bS16 (113 aa).

A disordered region spans residues 84–113; it reads PKPAYTEQPKKSAPKKRAQERAAAAAAAAA.

Belongs to the bacterial ribosomal protein bS16 family.

In Gluconacetobacter diazotrophicus (strain ATCC 49037 / DSM 5601 / CCUG 37298 / CIP 103539 / LMG 7603 / PAl5), this protein is Small ribosomal subunit protein bS16.